The chain runs to 387 residues: Putative 8-amino-7-oxononanoate synthase (387 aa).

Position 19 (Arg-19) interacts with substrate. A pyridoxal 5'-phosphate-binding site is contributed by 107-108; sequence GY. His-132 provides a ligand contact to substrate. Residues Ser-180, 206-209, and 237-240 contribute to the pyridoxal 5'-phosphate site; these read DEAH and TFGK. An N6-(pyridoxal phosphate)lysine modification is found at Lys-240. Residue Thr-354 participates in substrate binding.

It belongs to the class-II pyridoxal-phosphate-dependent aminotransferase family. BioF subfamily. As to quaternary structure, homodimer. Requires pyridoxal 5'-phosphate as cofactor.

The enzyme catalyses 6-carboxyhexanoyl-[ACP] + L-alanine + H(+) = (8S)-8-amino-7-oxononanoate + holo-[ACP] + CO2. The protein operates within cofactor biosynthesis; biotin biosynthesis. In terms of biological role, catalyzes the decarboxylative condensation of pimeloyl-[acyl-carrier protein] and L-alanine to produce 8-amino-7-oxononanoate (AON), [acyl-carrier protein], and carbon dioxide. The protein is Putative 8-amino-7-oxononanoate synthase (bioF) of Pasteurella multocida (strain Pm70).